The following is a 335-amino-acid chain: MEPRRMADSLRYVLMGTGPFAVPSFEAIRQQMDSTGDQIARVFVRPLPPVKSRGGPPPQPVREWAESHGLPVDAPASINDPETIASLTELNADLLVVCDYGQILKPDALQSARLGGINLHGSLLPAYRGAAPVQRALLSGDRETGVSVIHMTPRLDGGPIVASRTTPIRDDETSGELEVRLSEIGVDATREAIGLLRTIESLDSHGPLGEPQDPAKVSKAPRLSKAEAQIDWSATGREIDCLVRGMQPWPVAFTHTVVNENKPPLRVAIRGVRTETYAADASNIGRVMEHEGLAIGCGDGQVVIERLQPAGKKEMSGLDFKRGHRLTAGQQLIAP.

Position 122 to 125 (122 to 125 (SLLP)) interacts with (6S)-5,6,7,8-tetrahydrofolate. The interval 203–222 (DSHGPLGEPQDPAKVSKAPR) is disordered.

This sequence belongs to the Fmt family.

It catalyses the reaction L-methionyl-tRNA(fMet) + (6R)-10-formyltetrahydrofolate = N-formyl-L-methionyl-tRNA(fMet) + (6S)-5,6,7,8-tetrahydrofolate + H(+). Attaches a formyl group to the free amino group of methionyl-tRNA(fMet). The formyl group appears to play a dual role in the initiator identity of N-formylmethionyl-tRNA by promoting its recognition by IF2 and preventing the misappropriation of this tRNA by the elongation apparatus. The polypeptide is Methionyl-tRNA formyltransferase (Rhodopirellula baltica (strain DSM 10527 / NCIMB 13988 / SH1)).